We begin with the raw amino-acid sequence, 247 residues long: Small ribosomal subunit protein uS3 (247 aa).

The 69-residue stretch at valine 51–arginine 119 folds into the KH type-2 domain. Residues proline 224 to glutamate 233 are compositionally biased toward basic and acidic residues. Residues proline 224–arginine 247 form a disordered region.

Belongs to the universal ribosomal protein uS3 family. As to quaternary structure, part of the 30S ribosomal subunit. Forms a tight complex with proteins S10 and S14.

Functionally, binds the lower part of the 30S subunit head. Binds mRNA in the 70S ribosome, positioning it for translation. In Jannaschia sp. (strain CCS1), this protein is Small ribosomal subunit protein uS3.